Consider the following 116-residue polypeptide: Ribosome-binding factor A (116 aa).

The protein belongs to the RbfA family. Monomer. Binds 30S ribosomal subunits, but not 50S ribosomal subunits or 70S ribosomes.

It is found in the cytoplasm. One of several proteins that assist in the late maturation steps of the functional core of the 30S ribosomal subunit. Associates with free 30S ribosomal subunits (but not with 30S subunits that are part of 70S ribosomes or polysomes). Required for efficient processing of 16S rRNA. May interact with the 5'-terminal helix region of 16S rRNA. The protein is Ribosome-binding factor A of Chlorobium phaeobacteroides (strain DSM 266 / SMG 266 / 2430).